The chain runs to 57 residues: Large ribosomal subunit protein bL32c (57 aa).

Belongs to the bacterial ribosomal protein bL32 family.

The protein resides in the plastid. It is found in the chloroplast. The chain is Large ribosomal subunit protein bL32c from Amborella trichopoda.